A 275-amino-acid polypeptide reads, in one-letter code: Hydroxyethylthiazole kinase (275 aa).

Position 50 (methionine 50) interacts with substrate. Arginine 126 and serine 171 together coordinate ATP. Residue alanine 200 coordinates substrate.

The protein belongs to the Thz kinase family. It depends on Mg(2+) as a cofactor.

It catalyses the reaction 5-(2-hydroxyethyl)-4-methylthiazole + ATP = 4-methyl-5-(2-phosphooxyethyl)-thiazole + ADP + H(+). It participates in cofactor biosynthesis; thiamine diphosphate biosynthesis; 4-methyl-5-(2-phosphoethyl)-thiazole from 5-(2-hydroxyethyl)-4-methylthiazole: step 1/1. In terms of biological role, catalyzes the phosphorylation of the hydroxyl group of 4-methyl-5-beta-hydroxyethylthiazole (THZ). The protein is Hydroxyethylthiazole kinase of Acinetobacter baumannii (strain ACICU).